Consider the following 221-residue polypeptide: ATP-dependent Clp protease proteolytic subunit 3 (221 aa).

Serine 118 functions as the Nucleophile in the catalytic mechanism. Histidine 143 is a catalytic residue.

Belongs to the peptidase S14 family. Fourteen ClpP subunits assemble into 2 heptameric rings which stack back to back to give a disk-like structure with a central cavity, resembling the structure of eukaryotic proteasomes.

The protein localises to the cytoplasm. It carries out the reaction Hydrolysis of proteins to small peptides in the presence of ATP and magnesium. alpha-casein is the usual test substrate. In the absence of ATP, only oligopeptides shorter than five residues are hydrolyzed (such as succinyl-Leu-Tyr-|-NHMec, and Leu-Tyr-Leu-|-Tyr-Trp, in which cleavage of the -Tyr-|-Leu- and -Tyr-|-Trp bonds also occurs).. Cleaves peptides in various proteins in a process that requires ATP hydrolysis. Has a chymotrypsin-like activity. Plays a major role in the degradation of misfolded proteins. This is ATP-dependent Clp protease proteolytic subunit 3 from Nocardia farcinica (strain IFM 10152).